The chain runs to 207 residues: Ras-related protein Rab-2A (207 aa).

GTP is bound at residue 12 to 20 (GDTGVGKSC). Residues 34–42 (HDLTIGVEF) carry the Effector region motif. GTP is bound by residues 60-64 (DTAGQ), 118-121 (NKSD), and 148-150 (SAK). Positions 187–207 (GAPTSKQDGTDQKPAGGGCCK) are disordered. S-geranylgeranyl cysteine attachment occurs at residues Cys-205 and Cys-206.

It belongs to the small GTPase superfamily. Rab family.

The protein resides in the cell membrane. The enzyme catalyses GTP + H2O = GDP + phosphate + H(+). Its activity is regulated as follows. Regulated by guanine nucleotide exchange factors (GEFs) which promote the exchange of bound GDP for free GTP, GTPase activating proteins (GAPs) which increase the GTP hydrolysis activity, and GDP dissociation inhibitors which inhibit the dissociation of the nucleotide from the GTPase. Its function is as follows. The small GTPases Rab are key regulators of intracellular membrane trafficking, from the formation of transport vesicles to their fusion with membranes. Rabs cycle between active GTP-bound and inactive GDP-bound states. In their active state, drive transport of vesicular carriers from donor organelles to acceptor organelles to regulate the membrane traffic that maintains organelle identity and morphology. The protein is Ras-related protein Rab-2A (rab2A) of Dictyostelium discoideum (Social amoeba).